The following is a 104-amino-acid chain: Ribonuclease P protein component 4 (104 aa).

The Zn(2+) site is built by cysteine 57, cysteine 60, cysteine 83, and cysteine 86.

This sequence belongs to the eukaryotic/archaeal RNase P protein component 4 family. In terms of assembly, consists of a catalytic RNA component and at least 4-5 protein subunits. Zn(2+) is required as a cofactor.

The protein resides in the cytoplasm. The catalysed reaction is Endonucleolytic cleavage of RNA, removing 5'-extranucleotides from tRNA precursor.. Part of ribonuclease P, a protein complex that generates mature tRNA molecules by cleaving their 5'-ends. This chain is Ribonuclease P protein component 4, found in Saccharolobus islandicus (strain M.16.27) (Sulfolobus islandicus).